Here is an 89-residue protein sequence, read N- to C-terminus: Small ribosomal subunit protein uS14 (89 aa).

This sequence belongs to the universal ribosomal protein uS14 family. Part of the 30S ribosomal subunit. Contacts proteins S3 and S10.

In terms of biological role, binds 16S rRNA, required for the assembly of 30S particles and may also be responsible for determining the conformation of the 16S rRNA at the A site. The polypeptide is Small ribosomal subunit protein uS14 (Chlorobium phaeovibrioides (strain DSM 265 / 1930) (Prosthecochloris vibrioformis (strain DSM 265))).